Consider the following 365-residue polypeptide: Peptide chain release factor 2 (365 aa).

N5-methylglutamine is present on Gln-252.

The protein belongs to the prokaryotic/mitochondrial release factor family. Methylated by PrmC. Methylation increases the termination efficiency of RF2.

The protein resides in the cytoplasm. In terms of biological role, peptide chain release factor 2 directs the termination of translation in response to the peptide chain termination codons UGA and UAA. The sequence is that of Peptide chain release factor 2 from Shewanella woodyi (strain ATCC 51908 / MS32).